A 260-amino-acid polypeptide reads, in one-letter code: Late transcription factor 1 (260 aa).

Belongs to the chordopoxvirinae VLTF-1 family. In terms of assembly, interacts with the late transcription factors VLTF-2 and VLTF-3. Interacts with the late transcription elongation factor VLTF-4. Interacts with itself.

Functionally, associates with RNA polymerase to initiate transcription from late gene promoters. The chain is Late transcription factor 1 (OPG093) from Homo sapiens (Human).